A 506-amino-acid chain; its full sequence is Glutamate--tRNA ligase (506 aa).

Positions 29–39 (PSPTGTPHVGL) match the 'HIGH' region motif. Positions 273 to 277 (KLSKR) match the 'KMSKS' region motif. An ATP-binding site is contributed by Lys-276.

The protein belongs to the class-I aminoacyl-tRNA synthetase family. Glutamate--tRNA ligase type 1 subfamily. As to quaternary structure, monomer.

Its subcellular location is the cytoplasm. The catalysed reaction is tRNA(Glu) + L-glutamate + ATP = L-glutamyl-tRNA(Glu) + AMP + diphosphate. In terms of biological role, catalyzes the attachment of glutamate to tRNA(Glu) in a two-step reaction: glutamate is first activated by ATP to form Glu-AMP and then transferred to the acceptor end of tRNA(Glu). In Paenarthrobacter aurescens (strain TC1), this protein is Glutamate--tRNA ligase.